An 81-amino-acid polypeptide reads, in one-letter code: Cysteine-rich and transmembrane domain-containing protein PCC1 (81 aa).

Over residues 1–22 (MNQSAQNYFSVQKPSETSSGPY) the composition is skewed to polar residues. The interval 1–34 (MNQSAQNYFSVQKPSETSSGPYTSPPPIGYPTRD) is disordered. The helical transmembrane segment at 56–74 (AIMSCFSTCMECIFCCGVC) threads the bilayer.

It belongs to the CYSTM1 family. Expressed at very low levels in seedlings and petioles, and at higher levels in leaves. Also present in phloem sap.

The protein localises to the cell membrane. Its function is as follows. Modulates resistance against pathogens including oomycetes (e.g. Hyaloperonospora parasitica and Phytophthora brassicae) and fungi (e.g. Phytophthora brassicae). Controls the abscisic acid-mediated (ABA) signaling pathways. Regulator of the flowering time in response to stress (e.g. UV-C). Regulates polar lipid content; promotes phosphatidylinositol (PI) and 18:0 but prevents 18:2 and 18:3 polar lipids accumulation. The polypeptide is Cysteine-rich and transmembrane domain-containing protein PCC1 (PCC1) (Arabidopsis thaliana (Mouse-ear cress)).